Reading from the N-terminus, the 200-residue chain is Pyrrolidone-carboxylate peptidase (200 aa).

Catalysis depends on residues E78, C141, and H165.

This sequence belongs to the peptidase C15 family. As to quaternary structure, homotetramer.

The protein resides in the cytoplasm. The enzyme catalyses Release of an N-terminal pyroglutamyl group from a polypeptide, the second amino acid generally not being Pro.. Removes 5-oxoproline from various penultimate amino acid residues except L-proline. The chain is Pyrrolidone-carboxylate peptidase from Lactobacillus helveticus (strain DPC 4571).